A 203-amino-acid chain; its full sequence is Enterotoxin-like toxin X (203 aa).

It belongs to the staphylococcal/streptococcal toxin family.

Its subcellular location is the secreted. Plays a role in the inhibition of the host innate immune system. Inhibits phagocytosis and killing by human neutrophils by interacting with multiple neutrophil surface glycoproteins in a sialic acid-dependent manner. This Staphylococcus aureus (strain NCTC 8325 / PS 47) protein is Enterotoxin-like toxin X.